We begin with the raw amino-acid sequence, 197 residues long: Shikimate kinase (197 aa).

14–19 (GSGKST) provides a ligand contact to ATP. Position 18 (Ser-18) interacts with Mg(2+). Asp-36, Arg-60, and Gly-82 together coordinate substrate. Arg-120 serves as a coordination point for ATP. Residue Arg-147 participates in substrate binding.

Belongs to the shikimate kinase family. Monomer. The cofactor is Mg(2+).

It is found in the cytoplasm. The catalysed reaction is shikimate + ATP = 3-phosphoshikimate + ADP + H(+). Its pathway is metabolic intermediate biosynthesis; chorismate biosynthesis; chorismate from D-erythrose 4-phosphate and phosphoenolpyruvate: step 5/7. Functionally, catalyzes the specific phosphorylation of the 3-hydroxyl group of shikimic acid using ATP as a cosubstrate. This chain is Shikimate kinase, found in Prosthecochloris aestuarii (strain DSM 271 / SK 413).